The following is a 629-amino-acid chain: MHFHERFDVIVVGGGHAGTEAALASARMGSKTLLLTHNIDTLGQMSCNPAIGGIGKGHLVKEIDALGGAMAIATDYAGIQFRTLNSSKGPAVRATRAQADRALYRHKIQEILQHQPNLRIFQQAVDDLVVENETVVGVVTQMGLAFEAPAVVLTTGTFLSGKIHIGLENYSGGRAGDPPAIALAHRLQELPIRVGRLKTGTPPRIDANTIDFSKMTEQKGDDPLPVMSFIGDVNQHPEQVSCHITHTNERTHDIIRAGLDRSPMYSGVIEGIGPRYCPSIEDKINRFADKNSHQIFIEPEGLNTTEIYPNGISTSLPFDVQLNLVRSIKGMENAEIMRPGYAIEYDYFDPRDLKNSLETKTINGLFFAGQINGTTGYEEAGAQGLLAGMNASLQIQGKETWCPRRDQAYLGVLVDDLSTLGTKEPYRMFTSRAEYRLLLREDNADLRLTEKGRELGLVDDERWAKFSDKMESIETELQRLRSQWIHPRSPLVDVLNPHLKTPIAREATFEDLLRRPELDYPTLMSIDGFGPGIDDQRAAEQVQIQVKYSGYIQRQQDEIDKAIRHETTGLPLDLDYQEVPGLSNEVIAKMNEHKPETVGQASRISGMTPAAISILLVHLKKRGLLRKSA.

Gly13–Gly18 provides a ligand contact to FAD. Position 273–287 (Gly273–Phe287) interacts with NAD(+).

This sequence belongs to the MnmG family. As to quaternary structure, homodimer. Heterotetramer of two MnmE and two MnmG subunits. Requires FAD as cofactor.

The protein localises to the cytoplasm. Functionally, NAD-binding protein involved in the addition of a carboxymethylaminomethyl (cmnm) group at the wobble position (U34) of certain tRNAs, forming tRNA-cmnm(5)s(2)U34. The chain is tRNA uridine 5-carboxymethylaminomethyl modification enzyme MnmG from Shewanella piezotolerans (strain WP3 / JCM 13877).